Consider the following 46-residue polypeptide: MGISPPCYGNWPTLDETVKNVFTCLNFVVVWRVIFNPQRQGSWISC.

This is an uncharacterized protein from Escherichia coli.